A 449-amino-acid polypeptide reads, in one-letter code: Probable mitochondrial chaperone bcs1 (449 aa).

Topologically, residues 1-20 are mitochondrial intermembrane; it reads MDNIGAADAATSSGISGLLS. The helical transmembrane segment at 21–41 threads the bilayer; the sequence is GNSFLGAGIGLMGFGAGLAIL. Residues 42–449 are Mitochondrial matrix-facing; it reads RRGLISGASL…FNVHRKSLSV (408 aa). 249–256 serves as a coordination point for ATP; the sequence is GPPGSGKT.

Belongs to the AAA ATPase family. BCS1 subfamily.

The protein localises to the mitochondrion inner membrane. The catalysed reaction is ATP + H2O = ADP + phosphate + H(+). Its function is as follows. Chaperone necessary for the incorporation of Rieske iron-sulfur protein rip1 into the mitochondrial respiratory chain complex III. The sequence is that of Probable mitochondrial chaperone bcs1 from Schizosaccharomyces pombe (strain 972 / ATCC 24843) (Fission yeast).